The chain runs to 294 residues: NAD kinase (294 aa).

Asp73 serves as the catalytic Proton acceptor. NAD(+) is bound by residues 73–74 (DG), 147–148 (NE), His158, Arg175, Asp177, 188–193 (TAYSLS), and Gln249.

Belongs to the NAD kinase family. A divalent metal cation is required as a cofactor.

The protein resides in the cytoplasm. It carries out the reaction NAD(+) + ATP = ADP + NADP(+) + H(+). In terms of biological role, involved in the regulation of the intracellular balance of NAD and NADP, and is a key enzyme in the biosynthesis of NADP. Catalyzes specifically the phosphorylation on 2'-hydroxyl of the adenosine moiety of NAD to yield NADP. The protein is NAD kinase of Aeromonas salmonicida (strain A449).